Reading from the N-terminus, the 230-residue chain is MDLKYLNQKEAIDVDQELFTEYKFSVDQLMELAGLSCAHAVAKCFPAEKHPRILVCCGPGNNGGDGLVAARHLSLMGYTPTIYYPKPTAKPLFENLSHQCQMMDICGVKECPSVATAASDYDLILDALFGFSFKPPVRADFVAVVELLQQTKLPIASVDIPSGWDVEKGKLTECDVEPALLISLTAPKLCARHFRGEHHYLGGRFVPPALQRKYGLNLPTYPGNELCVKL.

Residues 11-218 (AIDVDQELFT…ALQRKYGLNL (208 aa)) enclose the YjeF N-terminal domain. (6S)-NADPHX is bound at residue 61 to 65 (NNGGD). K(+)-binding residues include Asn-62 and Asp-126. Residues 130–136 (GFSFKPP) and Asp-159 each bind (6S)-NADPHX. A K(+)-binding site is contributed by Ser-162.

The protein belongs to the NnrE/AIBP family. The cofactor is K(+).

The enzyme catalyses (6R)-NADHX = (6S)-NADHX. The catalysed reaction is (6R)-NADPHX = (6S)-NADPHX. In terms of biological role, catalyzes the epimerization of the S- and R-forms of NAD(P)HX, a damaged form of NAD(P)H that is a result of enzymatic or heat-dependent hydration. This is a prerequisite for the S-specific NAD(P)H-hydrate dehydratase to allow the repair of both epimers of NAD(P)HX. This chain is NAD(P)H-hydrate epimerase, found in Drosophila yakuba (Fruit fly).